A 197-amino-acid chain; its full sequence is MQNVSEREREEMGIVVNYLFSHNFLLKEFEREKYHLAVRNKDIIKQYLQVIGWDFIVDEKHGCIVIVSPHYEHRLKLKKDETIWLLVLRLIYEEKRSALSISQYPFTTLQEIKGKYETFRLPFVSKTKLRELVQIGKQNQLLRPIDNDIESDDCRFQLFHSCIHVLQQGDLNVLYEKIKSYSEGGDHSEMDEETTIN.

Functionally, component of antiplasmid transformation system Wadjet type I, composed of JetA, JetB, JetC and JetD. Expression of Wadjet type I in B.subtilis (strain BEST7003) reduces the transformation efficiency of plasmid pHCMC05. The polypeptide is Wadjet protein JetB (Bacillus cereus (strain Q1)).